Reading from the N-terminus, the 124-residue chain is Small ribosomal subunit protein uS12 (124 aa).

3-methylthioaspartic acid is present on Asp-89.

It belongs to the universal ribosomal protein uS12 family. As to quaternary structure, part of the 30S ribosomal subunit. Contacts proteins S8 and S17. May interact with IF1 in the 30S initiation complex.

Its function is as follows. With S4 and S5 plays an important role in translational accuracy. Interacts with and stabilizes bases of the 16S rRNA that are involved in tRNA selection in the A site and with the mRNA backbone. Located at the interface of the 30S and 50S subunits, it traverses the body of the 30S subunit contacting proteins on the other side and probably holding the rRNA structure together. The combined cluster of proteins S8, S12 and S17 appears to hold together the shoulder and platform of the 30S subunit. The sequence is that of Small ribosomal subunit protein uS12 from Shewanella halifaxensis (strain HAW-EB4).